Reading from the N-terminus, the 191-residue chain is GDP-mannose pyrophosphatase (191 aa).

GDP-alpha-D-mannose-binding positions include Tyr-17, 38-40, Arg-67, and 85-87; these read KRE and AGL. One can recognise a Nudix hydrolase domain in the interval 43–180; that stretch reads DRGNGATILL…EIRDGKTVLL (138 aa). Residues Ala-85, Glu-100, and Glu-104 each coordinate Mg(2+). The Nudix box motif lies at 86–106; sequence GLLDNDEPEVCIRKEAIEETG. GDP-alpha-D-mannose-binding positions include Glu-104, Glu-127, 150–151, and Lys-176; that span reads DE. Glu-151 contributes to the Mg(2+) binding site.

It belongs to the Nudix hydrolase family. NudK subfamily. As to quaternary structure, homodimer. The cofactor is Mg(2+).

The catalysed reaction is GDP-alpha-D-mannose + H2O = alpha-D-mannose 1-phosphate + GMP + 2 H(+). Nucleoside diphosphate sugar hydrolase that hydrolyzes GDP-mannose as its preferred substrate, yielding GMP and mannose-1-phosphate. This chain is GDP-mannose pyrophosphatase (nudK), found in Salmonella arizonae (strain ATCC BAA-731 / CDC346-86 / RSK2980).